Here is a 526-residue protein sequence, read N- to C-terminus: ATP-dependent RNA helicase DBP3 (526 aa).

Residues 1-33 show a composition bias toward basic and acidic residues; the sequence is MVEEHKNKKRRQEDGPADVPEKKVKVSKSEKKD. A disordered region spans residues 1 to 86; sequence MVEEHKNKKR…SSQGYTQSES (86 aa). The segment covering 34 to 65 has biased composition (basic residues); the sequence is KKEKKEKKEKKEKKEKKEKKEKKEKKEKKKKY. The span at 69–86 shows a compositional bias: polar residues; it reads ATISGSAQSSQGYTQSES. A Q motif motif is present at residues 118 to 144; sequence LSFDQIQLNSKISAVVNKFPTPTPIQS. Residues 147-318 enclose the Helicase ATP-binding domain; that stretch reads WPYLLSGKDV…STFMNQPVKV (172 aa). 160–167 serves as a coordination point for ATP; sequence AETGSGKT. A DEAD box motif is present at residues 265 to 268; the sequence is DEAD. Positions 334 to 496 constitute a Helicase C-terminal domain; it reads QIVEVIEPFD…PVPDELLKFG (163 aa).

This sequence belongs to the DEAD box helicase family. DDX5/DBP2 subfamily.

It localises to the nucleus. Its subcellular location is the nucleolus. It catalyses the reaction ATP + H2O = ADP + phosphate + H(+). Its function is as follows. ATP-dependent RNA helicase required for 60S ribosomal subunit synthesis. Involved in efficient pre-rRNA processing, predominantly at site A3, which is necessary for the normal formation of 25S and 5.8S rRNAs. In Scheffersomyces stipitis (strain ATCC 58785 / CBS 6054 / NBRC 10063 / NRRL Y-11545) (Yeast), this protein is ATP-dependent RNA helicase DBP3 (DBP3).